The sequence spans 131 residues: Class I hydrophobin 9 (131 aa).

A signal peptide spans 1-23 (MFARRAISIFAFMLVALSIFAAA). Intrachain disulfides connect C52-C112, C59-C106, C60-C93, and C113-C126. Residue N53 is glycosylated (N-linked (GlcNAc...) asparagine). An N-linked (GlcNAc...) asparagine glycan is attached at N115.

This sequence belongs to the fungal hydrophobin family. In terms of assembly, self-assembles to form functional amyloid fibrils called rodlets. Self-assembly into fibrillar rodlets occurs spontaneously at hydrophobic:hydrophilic interfaces and the rodlets further associate laterally to form amphipathic monolayers.

It is found in the secreted. The protein localises to the cell wall. Its function is as follows. Aerial growth, conidiation, and dispersal of filamentous fungi in the environment rely upon a capability of their secreting small amphipathic proteins called hydrophobins (HPBs) with low sequence identity. Class I can self-assemble into an outermost layer of rodlet bundles on aerial cell surfaces, conferring cellular hydrophobicity that supports fungal growth, development and dispersal; whereas Class II form highly ordered films at water-air interfaces through intermolecular interactions but contribute nothing to the rodlet structure. This chain is Class I hydrophobin 9, found in Flammulina velutipes (Agaricus velutipes).